A 142-amino-acid chain; its full sequence is Hemoglobin subunit alpha-1 (142 aa).

The Globin domain maps to V2–R142. H59 is an O2 binding site. H88 contributes to the heme b binding site.

The protein belongs to the globin family. In terms of assembly, heterotetramer of two alpha chains and two beta chains. In terms of tissue distribution, red blood cells.

Functionally, involved in oxygen transport from the lung to the various peripheral tissues. Its function is as follows. Hemopressin acts as an antagonist peptide of the cannabinoid receptor CNR1. Hemopressin-binding efficiently blocks cannabinoid receptor CNR1 and subsequent signaling. The chain is Hemoglobin subunit alpha-1 (HBA1) from Equus quagga burchellii (Burchell's zebra).